The sequence spans 464 residues: Cysteine--tRNA ligase (464 aa).

C32 serves as a coordination point for Zn(2+). Positions 34 to 44 (VTVYDDCHIGH) match the 'HIGH' region motif. Zn(2+)-binding residues include C213, H238, and E242. A 'KMSKS' region motif is present at residues 270–274 (KMSKS). Residue K273 coordinates ATP.

It belongs to the class-I aminoacyl-tRNA synthetase family. In terms of assembly, monomer. Zn(2+) is required as a cofactor.

Its subcellular location is the cytoplasm. It catalyses the reaction tRNA(Cys) + L-cysteine + ATP = L-cysteinyl-tRNA(Cys) + AMP + diphosphate. This chain is Cysteine--tRNA ligase, found in Francisella tularensis subsp. holarctica (strain LVS).